A 180-amino-acid chain; its full sequence is ATP synthase subunit b, plastid (180 aa).

A helical transmembrane segment spans residues 27–49 (LVTTLINIAVVLSLLIVFGKGFL).

Belongs to the ATPase B chain family. In terms of assembly, F-type ATPases have 2 components, F(1) - the catalytic core - and F(0) - the membrane proton channel. F(1) has five subunits: alpha(3), beta(3), gamma(1), delta(1), epsilon(1). F(0) has four main subunits: a(1), b(1), b'(1) and c(10-14). The alpha and beta chains form an alternating ring which encloses part of the gamma chain. F(1) is attached to F(0) by a central stalk formed by the gamma and epsilon chains, while a peripheral stalk is formed by the delta, b and b' chains.

It localises to the plastid membrane. Functionally, f(1)F(0) ATP synthase produces ATP from ADP in the presence of a proton or sodium gradient. F-type ATPases consist of two structural domains, F(1) containing the extramembraneous catalytic core and F(0) containing the membrane proton channel, linked together by a central stalk and a peripheral stalk. During catalysis, ATP synthesis in the catalytic domain of F(1) is coupled via a rotary mechanism of the central stalk subunits to proton translocation. In terms of biological role, component of the F(0) channel, it forms part of the peripheral stalk, linking F(1) to F(0). This chain is ATP synthase subunit b, plastid, found in Cuscuta gronovii (Common dodder).